Here is a 278-residue protein sequence, read N- to C-terminus: 4-deoxy-L-threo-5-hexosulose-uronate ketol-isomerase (278 aa).

Residues histidine 196, histidine 198, glutamate 203, and histidine 245 each contribute to the Zn(2+) site.

The protein belongs to the KduI family. Zn(2+) serves as cofactor.

It catalyses the reaction 5-dehydro-4-deoxy-D-glucuronate = 3-deoxy-D-glycero-2,5-hexodiulosonate. Its pathway is glycan metabolism; pectin degradation; 2-dehydro-3-deoxy-D-gluconate from pectin: step 4/5. Its function is as follows. Catalyzes the isomerization of 5-dehydro-4-deoxy-D-glucuronate to 3-deoxy-D-glycero-2,5-hexodiulosonate. This Salmonella choleraesuis (strain SC-B67) protein is 4-deoxy-L-threo-5-hexosulose-uronate ketol-isomerase.